Here is a 335-residue protein sequence, read N- to C-terminus: Transcriptional activator NphR (335 aa).

Positions 231-329 (TRVQRVIEQN…GSSPGLYRKE (99 aa)) constitute an HTH araC/xylS-type domain. 2 consecutive DNA-binding regions (H-T-H motif) follow at residues 249–270 (SDIAAAAGMSLRTVHKLFNAEG) and 296–319 (VADVSECAGFRDVSHFSRLFRSTF).

In terms of biological role, transcriptional activator of nphA1 and nphA2 involved in the degradation of 4-nitrophenol (4-NP). This Rhodococcus sp protein is Transcriptional activator NphR (nphR).